A 735-amino-acid chain; its full sequence is 1,4-alpha-glucan branching enzyme GlgB (735 aa).

The active-site Nucleophile is Asp-418. The Proton donor role is filled by Glu-471.

Belongs to the glycosyl hydrolase 13 family. GlgB subfamily. Monomer.

It carries out the reaction Transfers a segment of a (1-&gt;4)-alpha-D-glucan chain to a primary hydroxy group in a similar glucan chain.. It functions in the pathway glycan biosynthesis; glycogen biosynthesis. Catalyzes the formation of the alpha-1,6-glucosidic linkages in glycogen by scission of a 1,4-alpha-linked oligosaccharide from growing alpha-1,4-glucan chains and the subsequent attachment of the oligosaccharide to the alpha-1,6 position. This is 1,4-alpha-glucan branching enzyme GlgB from Agrobacterium fabrum (strain C58 / ATCC 33970) (Agrobacterium tumefaciens (strain C58)).